A 449-amino-acid chain; its full sequence is Phosphoglucosamine mutase (449 aa).

S104 serves as the catalytic Phosphoserine intermediate. S104, D243, D245, and D247 together coordinate Mg(2+). S104 is subject to Phosphoserine.

The protein belongs to the phosphohexose mutase family. Mg(2+) serves as cofactor. Post-translationally, activated by phosphorylation.

It catalyses the reaction alpha-D-glucosamine 1-phosphate = D-glucosamine 6-phosphate. Catalyzes the conversion of glucosamine-6-phosphate to glucosamine-1-phosphate. The sequence is that of Phosphoglucosamine mutase from Xanthomonas campestris pv. campestris (strain 8004).